We begin with the raw amino-acid sequence, 399 residues long: Tyrosine--tRNA ligase 2 (399 aa).

Residues proline 41–histidine 50 carry the 'HIGH' region motif. The 'KMSKS' region motif lies at lysine 225 to serine 229. Residue lysine 228 coordinates ATP. One can recognise an S4 RNA-binding domain in the interval isoleucine 336 to valine 398.

The protein belongs to the class-I aminoacyl-tRNA synthetase family. TyrS type 2 subfamily. Homodimer.

It localises to the cytoplasm. The catalysed reaction is tRNA(Tyr) + L-tyrosine + ATP = L-tyrosyl-tRNA(Tyr) + AMP + diphosphate + H(+). Its function is as follows. Catalyzes the attachment of tyrosine to tRNA(Tyr) in a two-step reaction: tyrosine is first activated by ATP to form Tyr-AMP and then transferred to the acceptor end of tRNA(Tyr). The chain is Tyrosine--tRNA ligase 2 from Pseudoalteromonas translucida (strain TAC 125).